We begin with the raw amino-acid sequence, 834 residues long: Probable receptor-like protein kinase At2g23200 (834 aa).

A signal peptide spans 1–28 (MENFCFQDSVSLFITIMVLVLLPRLSLS). Residues 29–405 (DTSTYTRPEN…SSSRVHIITG (377 aa)) lie on the Extracellular side of the membrane. Residues Asn61, Asn149, Asn221, Asn246, Asn277, Asn289, Asn314, Asn352, Asn361, and Asn394 are each glycosylated (N-linked (GlcNAc...) asparagine). The chain crosses the membrane as a helical span at residues 406-426 (CAVAAAAASALVFSLLFMVFL). Over 427–834 (KRRRSKKTKP…FSQLKISDAR (408 aa)) the chain is Cytoplasmic. The 274-residue stretch at 488–761 (FDEQLLIGKG…RDVIWDLEYV (274 aa)) folds into the Protein kinase domain. Residues 494–502 (IGKGGFGYV) and Lys516 contribute to the ATP site. The Proton acceptor role is filled by Asp613.

The protein belongs to the protein kinase superfamily. Ser/Thr protein kinase family.

The protein resides in the membrane. The protein is Probable receptor-like protein kinase At2g23200 of Arabidopsis thaliana (Mouse-ear cress).